The following is a 509-amino-acid chain: Maturase K (509 aa).

The protein belongs to the intron maturase 2 family. MatK subfamily.

The protein resides in the plastid. It localises to the chloroplast. In terms of biological role, usually encoded in the trnK tRNA gene intron. Probably assists in splicing its own and other chloroplast group II introns. This Abies firma (Momi fir) protein is Maturase K.